The primary structure comprises 637 residues: Nuclear receptor subfamily 2 group C member 1-A (637 aa).

Residues Val-149–Cys-224 constitute a DNA-binding region (nuclear receptor). 2 NR C4-type zinc fingers span residues Cys-152–Cys-172 and Cys-188–Cys-207. The region spanning Cys-383–Glu-624 is the NR LBD domain.

This sequence belongs to the nuclear hormone receptor family. NR2 subfamily.

Its subcellular location is the nucleus. In terms of biological role, orphan nuclear receptor. Binds the IR7 element in the promoter of its own gene in an autoregulatory negative feedback mechanism. Primarily repressor of a broad range of genes. Binds to hormone response elements (HREs) consisting of two 5'-AGGTCA-3' half site direct repeat consensus sequences. The sequence is that of Nuclear receptor subfamily 2 group C member 1-A (nr2c1-a) from Xenopus laevis (African clawed frog).